An 80-amino-acid polypeptide reads, in one-letter code: Secreted transmembrane peptide 3 (80 aa).

An N-terminal signal peptide occupies residues Met-1 to Gly-27. A disordered region spans residues Ile-44–Ser-80. The SCOOP motif signature appears at Pro-62–Ser-80. The segment covering Pro-70 to Ser-80 has biased composition (basic residues).

This sequence belongs to the serine rich endogenous peptide (SCOOP) phytocytokine family. Interacts with MIK2 (via extracellular leucine-rich repeat domain); this interaction triggers the formation of complex between MIK2 and the BAK1/SERK3 and SERK4 coreceptors, and subsequent BAK1 activation by phosphorylation. Mostly expressed in leaves, and, to a lower extent, in roots, stems, siliques, seeds and flowers.

The protein localises to the cell membrane. The protein resides in the secreted. It localises to the extracellular space. It is found in the apoplast. Its subcellular location is the endoplasmic reticulum. The protein localises to the golgi apparatus. Brassicaceae-specific phytocytokine (plant endogenous peptide released into the apoplast) perceived by MIK2 in a BAK1/SERK3 and SERK4 coreceptors-dependent manner, that modulates various physiological and antimicrobial processes including growth prevention and reactive oxygen species (ROS) response regulation. This Arabidopsis thaliana (Mouse-ear cress) protein is Secreted transmembrane peptide 3.